We begin with the raw amino-acid sequence, 659 residues long: MVSTDLPPLIELRGIRKRYGGGDKPEVEVLHGIDLDIRAGEFIAIVGSSGSGKSTLMHLLGCLDRPSSGSYRFAGEDVSTFGSDELAWLRRKAFGFVFQGYHLIPTESARENVEIPAIYAGLPPGERMQRAADLLGRLGLSDKLNNRPNQLSGGQQQRVSIARALMNGGHIILADEPTGALDSRSGAEVMELLRELAGAGHTVILITHDRDVAAQAQRVVEIRDGRIVADSVTDRQPSEQPLLHHAGLSSLEMTQAHEDTGTPFWQGLHETIRAAWRVMWIHRVRTSLTLLGIVIGVASVIVMLAIGEGTKQRVIDQMGSMGTTIMYMSSDVPSTGGPVGVITEEDLDEVARLPEISRVMPVIGDPILVRHQNVDKQIYVFSSPYIMPMVHHWRVAQGRFFTETEDRELAPVVVLGHKIYRSFFPHLSNPVGQYLLIGTSPFEVIGVMAERGAESGSQNYDDMVFIPYRAGRARVYQAQEQPDYIVMEAASMDQVQEAEEAIRALLLERHGREDFRIGNAAARLKTQLETRDTMTRMLGLVAAVSLLVGGIGVMNVMLMTVRERTREIGIRMATGAREYDILSQFLIEAMLVTITGGTVGVILGLTVGALLVFWEVPVVFSFGVMIGAFACAVITGLIFGYMPARTAARLDPVVALSSE.

The region spanning 10 to 249 (IELRGIRKRY…QPLLHHAGLS (240 aa)) is the ABC transporter domain. 47-54 (GSSGSGKS) lines the ATP pocket. 4 consecutive transmembrane segments (helical) span residues 287 to 307 (SLTLLGIVIGVASVIVMLAIG), 538 to 558 (LGLVAAVSLLVGGIGVMNVML), 594 to 614 (ITGGTVGVILGLTVGALLVFW), and 619 to 639 (VFSFGVMIGAFACAVITGLIF).

This sequence belongs to the ABC transporter superfamily. Macrolide exporter (TC 3.A.1.122) family. As to quaternary structure, homodimer.

Its subcellular location is the cell inner membrane. Non-canonical ABC transporter that contains transmembrane domains (TMD), which form a pore in the inner membrane, and an ATP-binding domain (NBD), which is responsible for energy generation. Confers resistance against macrolides. The protein is Macrolide export ATP-binding/permease protein MacB of Nitrosomonas europaea (strain ATCC 19718 / CIP 103999 / KCTC 2705 / NBRC 14298).